Here is a 65-residue protein sequence, read N- to C-terminus: MSKSKGARIVITLECCCRNLNNITKKKSGIFRYTSTKNRKNTPNRIELMKFCPYCNKHQKFREIK.

It belongs to the bacterial ribosomal protein bL33 family.

It is found in the plastid. Its subcellular location is the chloroplast. The protein is Large ribosomal subunit protein bL33c of Gracilaria tenuistipitata var. liui (Red alga).